The following is a 604-amino-acid chain: Transcriptional repressor rco-1 (604 aa).

Disordered regions lie at residues 87–110 (RGGA…PAIG) and 124–264 (GGQA…DRLP). The segment covering 144–163 (MPAPPGLQGPPPPPPPPSQQ) has biased composition (pro residues). Low complexity-rich tracts occupy residues 164–177 (PPFQ…QGPG) and 190–209 (PGPA…PATP). Residues 210–229 (QINTPIPYNGGPAQSPQVPT) show a composition bias toward polar residues. 7 WD repeats span residues 295 to 324 (QHES…QIYD), 342 to 372 (TGDL…RVWD), 384 to 414 (GHEQ…RLWD), 425 to 455 (SIED…RVWD), 469 to 499 (GHKD…KMWE), 523 to 553 (GHRD…QFWD), and 565 to 600 (GHKN…RIWS).

Its function is as follows. Represses transcription by RNA polymerase II. May be involved at several stages of conidiation and other growth and development processes. Appears to regulate genes that are expressed in asexual and sexual spore pathways. This chain is Transcriptional repressor rco-1 (rco-1), found in Neurospora crassa (strain ATCC 24698 / 74-OR23-1A / CBS 708.71 / DSM 1257 / FGSC 987).